A 422-amino-acid chain; its full sequence is UPF0761 membrane protein LHK_02978 (422 aa).

6 helical membrane-spanning segments follow: residues 44–64, 102–122, 141–161, 178–198, 212–232, and 246–266; these read LLSL…FPVF, LTAV…LTID, MLVY…GISG, LAGI…LTVL, ALIG…GFGL, and AFAT…TVLI.

It belongs to the UPF0761 family.

The protein localises to the cell inner membrane. This Laribacter hongkongensis (strain HLHK9) protein is UPF0761 membrane protein LHK_02978.